Here is a 611-residue protein sequence, read N- to C-terminus: Chaperone protein DnaK (611 aa).

Residue Thr-172 is modified to Phosphothreonine; by autocatalysis. The disordered stretch occupies residues 575–611 (AAQAAQAQQDGGNESADKQDDNVVDADYEEVNDDDKK). The span at 596 to 611 (NVVDADYEEVNDDDKK) shows a compositional bias: acidic residues.

It belongs to the heat shock protein 70 family.

Functionally, acts as a chaperone. This Shouchella clausii (strain KSM-K16) (Alkalihalobacillus clausii) protein is Chaperone protein DnaK.